The primary structure comprises 85 residues: Putative membrane protein insertion efficiency factor (85 aa).

It belongs to the UPF0161 family.

Its subcellular location is the cell inner membrane. Could be involved in insertion of integral membrane proteins into the membrane. The chain is Putative membrane protein insertion efficiency factor from Sodalis glossinidius (strain morsitans).